A 591-amino-acid chain; its full sequence is Aspartate--tRNA ligase (591 aa).

An L-aspartate-binding site is contributed by glutamate 173. The aspartate stretch occupies residues 197-200; it reads QLFK. Arginine 219 lines the L-aspartate pocket. ATP contacts are provided by residues 219–221 and glutamine 228; that span reads RDE. L-aspartate is bound at residue histidine 448. An ATP-binding site is contributed by glutamate 482. Arginine 489 contributes to the L-aspartate binding site. Residue 534 to 537 participates in ATP binding; sequence GLDR.

It belongs to the class-II aminoacyl-tRNA synthetase family. Type 1 subfamily. As to quaternary structure, homodimer.

Its subcellular location is the cytoplasm. The catalysed reaction is tRNA(Asp) + L-aspartate + ATP = L-aspartyl-tRNA(Asp) + AMP + diphosphate. Catalyzes the attachment of L-aspartate to tRNA(Asp) in a two-step reaction: L-aspartate is first activated by ATP to form Asp-AMP and then transferred to the acceptor end of tRNA(Asp). This Shewanella sp. (strain MR-4) protein is Aspartate--tRNA ligase.